Here is a 459-residue protein sequence, read N- to C-terminus: Asparagine--tRNA ligase (459 aa).

This sequence belongs to the class-II aminoacyl-tRNA synthetase family. In terms of assembly, homodimer.

It is found in the cytoplasm. It catalyses the reaction tRNA(Asn) + L-asparagine + ATP = L-asparaginyl-tRNA(Asn) + AMP + diphosphate + H(+). The chain is Asparagine--tRNA ligase from Pelobacter propionicus (strain DSM 2379 / NBRC 103807 / OttBd1).